The following is a 519-amino-acid chain: Cytosol aminopeptidase (519 aa).

S42 is subject to Phosphoserine. Position 45 is an N6-succinyllysine (K45). S54 bears the Phosphoserine mark. An N6-succinyllysine mark is found at K61 and K103. A phosphoserine mark is found at S180 and S194. 3 residues coordinate Zn(2+): L202, M203, and T205. K221 bears the N6-acetyllysine; alternate mark. K221 carries the N6-succinyllysine; alternate modification. S238 carries the post-translational modification Phosphoserine. Zn(2+) is bound by residues K282 and D287. K282, D287, S292, and K294 together coordinate substrate. D287 contacts Mg(2+). K294 is an active-site residue. Residues R303, D305, D364, and E366 each coordinate Zn(2+). Substrate contacts are provided by D305 and D364. Mg(2+) is bound by residues D364 and E366. The active site involves R368. K455 carries the N6-acetyllysine; alternate modification. Residue K455 is modified to N6-succinyllysine; alternate. Position 476 is an N6-succinyllysine (K476). The residue at position 489 (K489) is an N6-acetyllysine; alternate. K489 is modified (N6-succinyllysine; alternate).

Belongs to the peptidase M17 family. In terms of assembly, homohexamer. The cofactor is Zn(2+). It depends on Mn(2+) as a cofactor.

It is found in the cytoplasm. The catalysed reaction is Release of an N-terminal amino acid, Xaa-|-Yaa-, in which Xaa is preferably Leu, but may be other amino acids including Pro although not Arg or Lys, and Yaa may be Pro. Amino acid amides and methyl esters are also readily hydrolyzed, but rates on arylamides are exceedingly low.. The enzyme catalyses an S-substituted L-cysteinylglycine + H2O = an S-substituted L-cysteine + glycine. It catalyses the reaction L-cysteinylglycine + H2O = L-cysteine + glycine. It carries out the reaction S-benzyl-L-cysteinylglycine + H2O = S-benzyl-L-cysteine + glycine. The catalysed reaction is Release of N-terminal proline from a peptide.. Cytosolic metallopeptidase that catalyzes the removal of unsubstituted N-terminal hydrophobic amino acids from various peptides. The presence of Zn(2+) ions is essential for the peptidase activity, and the association with other cofactors can modulate the substrate spectificity of the enzyme. For instance, in the presence of Mn(2+), it displays a specific Cys-Gly hydrolyzing activity of Cys-Gly-S-conjugates. Involved in the metabolism of glutathione and in the degradation of glutathione S-conjugates, which may play a role in the control of the cell redox status. In Sus scrofa (Pig), this protein is Cytosol aminopeptidase.